The sequence spans 202 residues: Na(+)-translocating NADH-quinone reductase subunit E (202 aa).

The next 6 helical transmembrane spans lie at 11-31 (SIFI…YLAV), 39-59 (MGLG…NNLL), 79-99 (LTFV…QILE), 114-134 (GIFL…LFMV), 144-164 (VTFG…LAGI), and 180-200 (LGIT…FSGI).

It belongs to the NqrDE/RnfAE family. Composed of six subunits; NqrA, NqrB, NqrC, NqrD, NqrE and NqrF.

Its subcellular location is the cell inner membrane. The enzyme catalyses a ubiquinone + n Na(+)(in) + NADH + H(+) = a ubiquinol + n Na(+)(out) + NAD(+). Its function is as follows. NQR complex catalyzes the reduction of ubiquinone-1 to ubiquinol by two successive reactions, coupled with the transport of Na(+) ions from the cytoplasm to the periplasm. NqrA to NqrE are probably involved in the second step, the conversion of ubisemiquinone to ubiquinol. The chain is Na(+)-translocating NADH-quinone reductase subunit E from Maridesulfovibrio salexigens (strain ATCC 14822 / DSM 2638 / NCIMB 8403 / VKM B-1763) (Desulfovibrio salexigens).